The following is a 962-amino-acid chain: MDEQALLGLNPNADSDFRQRALAYFEQLKISPDAWQVCAEALAQRTYSDDHVKFFCFQVLEHQVKYKYSELTTVQQQLIRETLISWLQAQMLNPQPEKTFIRNKAAQVFALLFVTEYLTKWPKFFFDILSVVDLNPRGVDLYLRILMAIDSELVDRDVVHTSEEARRNTLIKDTMREQCIPNLVESWYQILQNYQYTNSEVTCQCLEVVGAYVSWIDLSLIANDRFINMLLGHMSIEVLREEACDCLFEVVNKGMDPVDKMKLVESLCQVLQSAGFFSIDQEEDVDFLARFSKLVNGMGQSLIVSWSKLIKNGDIKNAQEALQAIETKVALMLQLLIHEDDDISSNIIGFCYDYLHILKQLTVLSDQQKANVEAIMLAVMKKLTYDEEYNFENEGEDGAMFVEYRKQLKLLLDRLAQVSPELLLASVRRVFTSTLQNWQTTRFMEVEVAIRLLYMLAEALPVSHGAHFSGDVSKASALQDMMRTLVTSGVSSYQHTSVTLEFFETVVRYEKFFTVEPQHIPCVLMAFLDHRGLRHSSAKVRSRTAYLFSRFVKSLNKQMNPFIEDILNRIQDLLELSPPENGHQSLLSSDDQLFIYETAGVLIVNSEYPAERKQALMRNLLTPLMEKFKILLEKLMLAQDEERQASLADCLNHAVGFASRTSKAFSNKQTVKQCGCSEVYLDCLQTFLPALSCPLQKDILRSGVRTFLHRMIICLEEEVLPFIPSASEHMLKDCEAKDLQEFIPLINQITAKFKIQVSPFLQQMFMPLLHAIFEVLLRPAEENDQSAALEKQMLRRSYFAFLQTVTSSGMSEVIANQGAENVERVLVTVIQGAVEYPDPIAQKTCFIILSKLVELWGGKDGPVGFADFVYKHIVPACFLAPLKQTFDLADAQTVLALSECAVTLKTIHLKRGPECVQYLQQEYLPSLQVAPEIIQEFCQALQQPDAKVFKNYLKVFFQRAKP.

Residue Met1 is modified to N-acetylmethionine. Lys634 is subject to N6-acetyllysine.

As to quaternary structure, found in a complex with XPOT, Ran and tRNA. Probably found in a complex with nucleoporins. Interacts with Ran and tRNA in a GTP-dependent manner.

It is found in the nucleus. Its subcellular location is the cytoplasm. Mediates the nuclear export of aminoacylated tRNAs. In the nucleus binds to tRNA and to the GTPase Ran in its active GTP-bound form. Docking of this trimeric complex to the nuclear pore complex (NPC) is mediated through binding to nucleoporins. Upon transit of a nuclear export complex into the cytoplasm, disassembling of the complex and hydrolysis of Ran-GTP to Ran-GDP (induced by RANBP1 and RANGAP1, respectively) cause release of the tRNA from the export receptor. XPOT then return to the nuclear compartment and mediate another round of transport. The directionality of nuclear export is thought to be conferred by an asymmetric distribution of the GTP- and GDP-bound forms of Ran between the cytoplasm and nucleus. The sequence is that of Exportin-T (XPOT) from Pongo abelii (Sumatran orangutan).